The following is a 608-amino-acid chain: Albumin (608 aa).

Residues 1–18 (MKWVTFISLLLLFSSAYS) form the signal peptide. Residues 19–24 (RGVTRR) constitute a propeptide that is removed on maturation. Albumin domains follow at residues 19 to 210 (RGVT…DALR), 211 to 403 (EKVL…EFKP), and 404 to 601 (LVEE…KLVA). Position 27 (His27) interacts with Cu cation. Ser29 bears the Phosphoserine mark. Ca(2+) is bound by residues Glu30 and Asp37. A disulfide bridge connects residues Cys77 and Cys86. 2 positions are modified to phosphoserine: Ser82 and Ser89. His91 provides a ligand contact to Zn(2+). Intrachain disulfides connect Cys99/Cys115, Cys114/Cys125, Cys148/Cys193, Cys192/Cys201, Cys224/Cys270, and Cys269/Cys277. Lys229 bears the N6-succinyllysine mark. Residue Glu268 coordinates Ca(2+). Zn(2+) contacts are provided by His271 and Asp273. Ca(2+) is bound by residues Asp273, Glu276, Asp279, and Asp283. Intrachain disulfides connect Cys289-Cys303, Cys302-Cys313, Cys340-Cys385, Cys384-Cys393, Cys416-Cys462, Cys461-Cys472, Cys485-Cys501, and Cys500-Cys511. Ser443 is subject to Phosphoserine. 2 positions are modified to phosphothreonine: Thr444 and Thr446. At Lys460 the chain carries N6-succinyllysine. A Phosphoserine modification is found at Ser513. Cystine bridges form between Cys538–Cys583 and Cys582–Cys591. Lys558 is subject to N6-methyllysine. At Thr570 the chain carries Phosphothreonine. Position 588 is an N6-succinyllysine (Lys588).

The protein belongs to the ALB/AFP/VDB family. In terms of assembly, interacts with FCGRT; this interaction regulates ALB homeostasis. Interacts with TASOR. In plasma, occurs in a covalently-linked complex with chromophore-bound alpha-1-microglobulin; this interaction does not prevent fatty acid binding to ALB. Phosphorylated by FAM20C in the extracellular medium. As to expression, plasma.

It localises to the secreted. Its function is as follows. Binds water, Ca(2+), Na(+), K(+), fatty acids, hormones, bilirubin and drugs. Its main function is the regulation of the colloidal osmotic pressure of blood. Major zinc transporter in plasma, typically binds about 80% of all plasma zinc. Major calcium and magnesium transporter in plasma, binds approximately 45% of circulating calcium and magnesium in plasma. Potentially has more than two calcium-binding sites and might additionally bind calcium in a non-specific manner. The shared binding site between zinc and calcium at residue Asp-273 suggests a crosstalk between zinc and calcium transport in the blood. The rank order of affinity is zinc &gt; calcium &gt; magnesium. Binds to the bacterial siderophore enterobactin and inhibits enterobactin-mediated iron uptake of E.coli from ferric transferrin, and may thereby limit the utilization of iron and growth of enteric bacteria such as E.coli. Does not prevent iron uptake by the bacterial siderophore aerobactin. In Felis catus (Cat), this protein is Albumin (ALB).